The following is a 286-amino-acid chain: Protein HEXIM2 (286 aa).

Residues 1-11 are compositionally biased toward polar residues; that stretch reads MMATPNQTACN. Positions 1 to 195 are disordered; that stretch reads MMATPNQTAC…GEFQRKDFSE (195 aa). Ser-29 is subject to Phosphoserine. Residue Thr-32 is modified to Phosphothreonine. Ser-39 carries the post-translational modification Phosphoserine. Thr-46 is modified (phosphothreonine). Phosphoserine occurs at positions 51, 53, 71, 76, and 81. Residues 68 to 78 are compositionally biased toward polar residues; the sequence is NSRSPRTQSPG. The span at 87–103 shows a compositional bias: basic residues; it reads ARKKHRRRPSKRKRHWR. Residues 113 to 132 show a composition bias toward basic and acidic residues; it reads KQQRDERQSQRASRVREEMF. The interval 140–143 is interaction with P-TEFb; it reads PYNT. Positions 178 to 195 are enriched in basic and acidic residues; it reads SDGRGRAHGEFQRKDFSE. Residues 207–277 are a coiled coil; sequence GRSKQELVRD…QENQMWNREG (71 aa). The segment at 226-286 is interaction with CCNT1, HEXIM1 and HEXIM2; sequence QAEEETRRLQ…GCRCDEEPGT (61 aa).

It belongs to the HEXIM family. Homooligomer and heterooligomer with HEXIM1; probably dimeric. Core component of the 7SK RNP complex, at least composed of 7SK RNA, LARP7, MEPCE, HEXIM1 (or HEXIM2) and P-TEFb (composed of CDK9 and CCNT1/cyclin-T1). Interacts with CCNT2. In terms of tissue distribution, ubiquitously expressed with higher expression in testis. HEXIM1 and HEXIM2 are differentially expressed.

Its subcellular location is the nucleus. In terms of biological role, transcriptional regulator which functions as a general RNA polymerase II transcription inhibitor. Core component of the 7SK RNP complex: in cooperation with 7SK snRNA sequesters P-TEFb in a large inactive 7SK snRNP complex preventing RNA polymerase II phosphorylation and subsequent transcriptional elongation. This is Protein HEXIM2 (HEXIM2) from Homo sapiens (Human).